The sequence spans 334 residues: Dihydroorotate dehydrogenase (quinone) (334 aa).

Residues 59 to 63 and Thr-83 each bind FMN; that span reads AGLDK. Substrate is bound at residue Lys-63. 108–112 is a substrate binding site; it reads NRMGF. FMN contacts are provided by Asn-136 and Asn-169. Asn-169 lines the substrate pocket. The active-site Nucleophile is the Ser-172. Asn-174 serves as a coordination point for substrate. The FMN site is built by Lys-214 and Thr-242. 243-244 contributes to the substrate binding site; it reads NT. Residues Gly-265, Gly-294, and 315 to 316 contribute to the FMN site; that span reads YS.

The protein belongs to the dihydroorotate dehydrogenase family. Type 2 subfamily. As to quaternary structure, monomer. FMN is required as a cofactor.

It is found in the cell membrane. The catalysed reaction is (S)-dihydroorotate + a quinone = orotate + a quinol. The protein operates within pyrimidine metabolism; UMP biosynthesis via de novo pathway; orotate from (S)-dihydroorotate (quinone route): step 1/1. Functionally, catalyzes the conversion of dihydroorotate to orotate with quinone as electron acceptor. This chain is Dihydroorotate dehydrogenase (quinone), found in Acinetobacter baylyi (strain ATCC 33305 / BD413 / ADP1).